A 29-amino-acid polypeptide reads, in one-letter code: ARYAILFAGSNVVYNAXXQADIYTIYTFL.

In Tritrichomonas foetus (Trichomonas foetus), this protein is 28 kDa protein.